The sequence spans 696 residues: Elongation factor G (696 aa).

The tr-type G domain maps to 8–290 (ERYRNIGISA…KVIELMPAPT (283 aa)). GTP-binding positions include 17 to 24 (AHIDAGKT), 88 to 92 (DTPGH), and 142 to 145 (NKMD).

This sequence belongs to the TRAFAC class translation factor GTPase superfamily. Classic translation factor GTPase family. EF-G/EF-2 subfamily.

Its subcellular location is the cytoplasm. Its function is as follows. Catalyzes the GTP-dependent ribosomal translocation step during translation elongation. During this step, the ribosome changes from the pre-translocational (PRE) to the post-translocational (POST) state as the newly formed A-site-bound peptidyl-tRNA and P-site-bound deacylated tRNA move to the P and E sites, respectively. Catalyzes the coordinated movement of the two tRNA molecules, the mRNA and conformational changes in the ribosome. The chain is Elongation factor G from Thiobacillus denitrificans (strain ATCC 25259 / T1).